A 179-amino-acid chain; its full sequence is Replication restart protein DnaT (179 aa).

The disordered stretch occupies residues 156–179 (GGLPKRDVNTVSEPDSQIPPGFRG).

This sequence belongs to the DnaT family. Homooligomerizes. Interacts with PriB. Component of the replication restart primosome. Primosome assembly occurs via a 'hand-off' mechanism. PriA binds to replication forks, subsequently PriB then DnaT bind; DnaT then displaces ssDNA to generate the helicase loading substrate.

Functionally, involved in the restart of stalled replication forks, which reloads the replicative helicase on sites other than the origin of replication. Can function in multiple replication restart pathways. Displaces ssDNA from a PriB-ssDNA complex. Probably forms a spiral filament on ssDNA. The protein is Replication restart protein DnaT of Shigella boydii serotype 18 (strain CDC 3083-94 / BS512).